Reading from the N-terminus, the 324-residue chain is Fructose-1,6-bisphosphatase class 1 (324 aa).

Positions 88, 107, 109, and 110 each coordinate Mg(2+). Substrate-binding positions include 110–113 (DGSS), Asn-199, and Lys-265. Glu-271 serves as a coordination point for Mg(2+).

It belongs to the FBPase class 1 family. In terms of assembly, homotetramer. It depends on Mg(2+) as a cofactor.

The protein localises to the cytoplasm. It catalyses the reaction beta-D-fructose 1,6-bisphosphate + H2O = beta-D-fructose 6-phosphate + phosphate. The protein operates within carbohydrate biosynthesis; gluconeogenesis. The polypeptide is Fructose-1,6-bisphosphatase class 1 (Neisseria meningitidis serogroup A / serotype 4A (strain DSM 15465 / Z2491)).